The sequence spans 729 residues: Fatty acid oxidation complex subunit alpha (729 aa).

The enoyl-CoA hydratase/isomerase stretch occupies residues 1–189; the sequence is MLYKGDTLYL…KIGLVDGVVK (189 aa). Asp-296 provides a ligand contact to substrate. The segment at 311 to 729 is 3-hydroxyacyl-CoA dehydrogenase; sequence ETPKQAAVLG…ARPVGSLKTA (419 aa). NAD(+) contacts are provided by residues Met-324, Asp-343, 400–402, Lys-407, and Ser-429; that span reads VVE. His-450 acts as the For 3-hydroxyacyl-CoA dehydrogenase activity in catalysis. Asn-453 is a binding site for NAD(+). Substrate is bound by residues Asn-500 and Tyr-660. The interval 708–729 is disordered; the sequence is RHNEPYYPPVEPARPVGSLKTA.

In the N-terminal section; belongs to the enoyl-CoA hydratase/isomerase family. This sequence in the C-terminal section; belongs to the 3-hydroxyacyl-CoA dehydrogenase family. In terms of assembly, heterotetramer of two alpha chains (FadB) and two beta chains (FadA).

It catalyses the reaction a (3S)-3-hydroxyacyl-CoA + NAD(+) = a 3-oxoacyl-CoA + NADH + H(+). The enzyme catalyses a (3S)-3-hydroxyacyl-CoA = a (2E)-enoyl-CoA + H2O. The catalysed reaction is a 4-saturated-(3S)-3-hydroxyacyl-CoA = a (3E)-enoyl-CoA + H2O. It carries out the reaction (3S)-3-hydroxybutanoyl-CoA = (3R)-3-hydroxybutanoyl-CoA. It catalyses the reaction a (3Z)-enoyl-CoA = a 4-saturated (2E)-enoyl-CoA. The enzyme catalyses a (3E)-enoyl-CoA = a 4-saturated (2E)-enoyl-CoA. The protein operates within lipid metabolism; fatty acid beta-oxidation. In terms of biological role, involved in the aerobic and anaerobic degradation of long-chain fatty acids via beta-oxidation cycle. Catalyzes the formation of 3-oxoacyl-CoA from enoyl-CoA via L-3-hydroxyacyl-CoA. It can also use D-3-hydroxyacyl-CoA and cis-3-enoyl-CoA as substrate. The sequence is that of Fatty acid oxidation complex subunit alpha from Salmonella typhimurium (strain LT2 / SGSC1412 / ATCC 700720).